Consider the following 331-residue polypeptide: Type 2 lactosamine alpha-2,3-sialyltransferase (331 aa).

Topologically, residues 1 to 4 (MRGY) are cytoplasmic. Residues 5–25 (LVAIFLSAVFLYYVLHCILWG) form a helical; Signal-anchor for type II membrane protein membrane-spanning segment. The Lumenal portion of the chain corresponds to 26 to 331 (TNVYWVAPVE…KNLVINLTQD (306 aa)). N-linked (GlcNAc...) asparagine glycosylation is found at asparagine 129, asparagine 181, asparagine 282, asparagine 295, asparagine 308, and asparagine 327.

Belongs to the glycosyltransferase 29 family.

It localises to the golgi apparatus membrane. It carries out the reaction a neolactoside nLc4Cer(d18:1(4E)) + CMP-N-acetyl-beta-neuraminate = a neolactoside IV(3)-alpha-NeuAc-nLc4Cer(d18:1(4E)) + CMP + H(+). The enzyme catalyses a beta-D-galactosyl-(1-&gt;4)-N-acetyl-beta-D-glucosaminyl derivative + CMP-N-acetyl-beta-neuraminate = an N-acetyl-alpha-neuraminyl-(2-&gt;3)-beta-D-galactosyl-(1-&gt;4)-N-acetyl-beta-D-glucosaminyl derivative + CMP + H(+). It catalyses the reaction a neolactoside nLc6Cer(d18:1(4E)) + CMP-N-acetyl-beta-neuraminate = a neolactoside VI(3)-alpha-NeuNAc-nLc6Cer(d18:1(4E)) + CMP + H(+). In terms of biological role, transfers the sialyl residue from CMP-N-acetyl-beta-neuraminate to the terminal galactose residue on sugar chains of glycoproteins and glycolipids. It's alpha-2,3-sialyltransferase activity is specific toward type II glycan chains (Galbeta1-4GlcNAc) on glycoproteins and glycolipids such as neolactosides nLc4Cer and nLc6Cer, whose sialyl-products serve as precursors for the Lewis X antigen. Critically involved in the synthesis of functional selectin ligands needed for neutrophil recruitment during inflammation and lymphocyte homing to the lymph nodes. The sequence is that of Type 2 lactosamine alpha-2,3-sialyltransferase (ST3GAL6) from Pan troglodytes (Chimpanzee).